The primary structure comprises 424 residues: Serine--tRNA ligase (424 aa).

Residue 231–233 participates in L-serine binding; it reads TAE. 262–264 lines the ATP pocket; the sequence is RSE. Glu285 is an L-serine binding site. 349–352 contributes to the ATP binding site; it reads EISS. Position 385 (Ser385) interacts with L-serine.

The protein belongs to the class-II aminoacyl-tRNA synthetase family. Type-1 seryl-tRNA synthetase subfamily. In terms of assembly, homodimer. The tRNA molecule binds across the dimer.

Its subcellular location is the cytoplasm. It carries out the reaction tRNA(Ser) + L-serine + ATP = L-seryl-tRNA(Ser) + AMP + diphosphate + H(+). It catalyses the reaction tRNA(Sec) + L-serine + ATP = L-seryl-tRNA(Sec) + AMP + diphosphate + H(+). The protein operates within aminoacyl-tRNA biosynthesis; selenocysteinyl-tRNA(Sec) biosynthesis; L-seryl-tRNA(Sec) from L-serine and tRNA(Sec): step 1/1. Catalyzes the attachment of serine to tRNA(Ser). Is also able to aminoacylate tRNA(Sec) with serine, to form the misacylated tRNA L-seryl-tRNA(Sec), which will be further converted into selenocysteinyl-tRNA(Sec). This chain is Serine--tRNA ligase, found in Bacillus cereus (strain ATCC 10987 / NRS 248).